A 258-amino-acid chain; its full sequence is MPRYKLTIEYDGTPFAGWQIQAELPTVQGVLAAAVKGFSGEEAHVAGAGRTDAGVHATGQVAHIHLARDWRPDQVRDAMTAHLRPHPVAVVAVERVADDFDARFSAVKRHYLYRIVNRRPDLALDRDRAWRVPQKLDASAMHVAAQRLLGKHDFTTFRAAECQAASPEKTLDQLDVMRSGDDIRIVTSARSFLHHQVRSMVGSLIRVGEGRWSADDLADALAARDRRRCGPMAPACGLYLAAVSYPEQIVETGAPDRI.

The active-site Nucleophile is the D52. Y111 is a binding site for substrate.

This sequence belongs to the tRNA pseudouridine synthase TruA family. In terms of assembly, homodimer.

It carries out the reaction uridine(38/39/40) in tRNA = pseudouridine(38/39/40) in tRNA. Functionally, formation of pseudouridine at positions 38, 39 and 40 in the anticodon stem and loop of transfer RNAs. In Azorhizobium caulinodans (strain ATCC 43989 / DSM 5975 / JCM 20966 / LMG 6465 / NBRC 14845 / NCIMB 13405 / ORS 571), this protein is tRNA pseudouridine synthase A.